The chain runs to 147 residues: Deoxyuridine 5'-triphosphate nucleotidohydrolase (147 aa).

Substrate-binding positions include 67–69, Asn-80, and 84–86; these read RSG and TID.

This sequence belongs to the dUTPase family. It depends on Mg(2+) as a cofactor.

It carries out the reaction dUTP + H2O = dUMP + diphosphate + H(+). It functions in the pathway pyrimidine metabolism; dUMP biosynthesis; dUMP from dCTP (dUTP route): step 2/2. Functionally, this enzyme is involved in nucleotide metabolism: it produces dUMP, the immediate precursor of thymidine nucleotides and it decreases the intracellular concentration of dUTP so that uracil cannot be incorporated into DNA. The polypeptide is Deoxyuridine 5'-triphosphate nucleotidohydrolase (Anaplasma marginale (strain St. Maries)).